Reading from the N-terminus, the 217-residue chain is ATP-dependent Clp protease proteolytic subunit (217 aa).

The active-site Nucleophile is the serine 119. Histidine 144 is a catalytic residue.

This sequence belongs to the peptidase S14 family. In terms of assembly, fourteen ClpP subunits assemble into 2 heptameric rings which stack back to back to give a disk-like structure with a central cavity, resembling the structure of eukaryotic proteasomes.

It is found in the cytoplasm. It carries out the reaction Hydrolysis of proteins to small peptides in the presence of ATP and magnesium. alpha-casein is the usual test substrate. In the absence of ATP, only oligopeptides shorter than five residues are hydrolyzed (such as succinyl-Leu-Tyr-|-NHMec, and Leu-Tyr-Leu-|-Tyr-Trp, in which cleavage of the -Tyr-|-Leu- and -Tyr-|-Trp bonds also occurs).. Cleaves peptides in various proteins in a process that requires ATP hydrolysis. Has a chymotrypsin-like activity. Plays a major role in the degradation of misfolded proteins. This chain is ATP-dependent Clp protease proteolytic subunit, found in Bordetella bronchiseptica (strain ATCC BAA-588 / NCTC 13252 / RB50) (Alcaligenes bronchisepticus).